We begin with the raw amino-acid sequence, 222 residues long: Eukaryotic translation initiation factor 3 subunit K (222 aa).

The region spanning 46 to 208 (YDLEANLAVL…KIKTKNITEK (163 aa)) is the PCI domain.

This sequence belongs to the eIF-3 subunit K family. Component of the eukaryotic translation initiation factor 3 (eIF-3) complex. The eIF-3 complex interacts with pix.

Its subcellular location is the cytoplasm. Its function is as follows. Component of the eukaryotic translation initiation factor 3 (eIF-3) complex, which is involved in protein synthesis of a specialized repertoire of mRNAs and, together with other initiation factors, stimulates binding of mRNA and methionyl-tRNAi to the 40S ribosome. The eIF-3 complex specifically targets and initiates translation of a subset of mRNAs involved in cell proliferation. This Drosophila yakuba (Fruit fly) protein is Eukaryotic translation initiation factor 3 subunit K.